A 559-amino-acid chain; its full sequence is Formate--tetrahydrofolate ligase (559 aa).

68–75 (TPAGEGKT) is an ATP binding site.

Belongs to the formate--tetrahydrofolate ligase family.

It catalyses the reaction (6S)-5,6,7,8-tetrahydrofolate + formate + ATP = (6R)-10-formyltetrahydrofolate + ADP + phosphate. The protein operates within one-carbon metabolism; tetrahydrofolate interconversion. This Rhizobium etli (strain ATCC 51251 / DSM 11541 / JCM 21823 / NBRC 15573 / CFN 42) protein is Formate--tetrahydrofolate ligase.